Reading from the N-terminus, the 172-residue chain is Translation initiation factor IF-3 (172 aa).

It belongs to the IF-3 family. Monomer.

The protein localises to the cytoplasm. IF-3 binds to the 30S ribosomal subunit and shifts the equilibrium between 70S ribosomes and their 50S and 30S subunits in favor of the free subunits, thus enhancing the availability of 30S subunits on which protein synthesis initiation begins. This is Translation initiation factor IF-3 from Lactobacillus johnsonii (strain CNCM I-12250 / La1 / NCC 533).